Here is a 130-residue protein sequence, read N- to C-terminus: Small ribosomal subunit protein uS9 (130 aa).

It belongs to the universal ribosomal protein uS9 family.

In Streptococcus thermophilus (strain CNRZ 1066), this protein is Small ribosomal subunit protein uS9.